The sequence spans 146 residues: Small ribosomal subunit protein uS9x (146 aa).

Belongs to the universal ribosomal protein uS9 family.

Its subcellular location is the cytoplasm. In Arabidopsis thaliana (Mouse-ear cress), this protein is Small ribosomal subunit protein uS9x (RPS16C).